We begin with the raw amino-acid sequence, 154 residues long: Deoxyuridine 5'-triphosphate nucleotidohydrolase (154 aa).

Substrate-binding positions include 74–76 (RSG), Asn87, 91–93 (TID), and Lys101.

Belongs to the dUTPase family. The cofactor is Mg(2+).

The catalysed reaction is dUTP + H2O = dUMP + diphosphate + H(+). It functions in the pathway pyrimidine metabolism; dUMP biosynthesis; dUMP from dCTP (dUTP route): step 2/2. This enzyme is involved in nucleotide metabolism: it produces dUMP, the immediate precursor of thymidine nucleotides and it decreases the intracellular concentration of dUTP so that uracil cannot be incorporated into DNA. The sequence is that of Deoxyuridine 5'-triphosphate nucleotidohydrolase from Cytophaga hutchinsonii (strain ATCC 33406 / DSM 1761 / CIP 103989 / NBRC 15051 / NCIMB 9469 / D465).